The following is a 427-amino-acid chain: Peptidase B (427 aa).

Mn(2+) is bound by residues K195 and D200. Residue K207 is part of the active site. Mn(2+)-binding residues include D218, D277, and E279. Residue R281 is part of the active site.

It belongs to the peptidase M17 family. As to quaternary structure, homohexamer. The cofactor is Mn(2+).

The protein localises to the cytoplasm. It carries out the reaction Release of an N-terminal amino acid, Xaa, from a peptide or arylamide. Xaa is preferably Glu or Asp but may be other amino acids, including Leu, Met, His, Cys and Gln.. Probably plays an important role in intracellular peptide degradation. The polypeptide is Peptidase B (Shigella dysenteriae serotype 1 (strain Sd197)).